A 556-amino-acid polypeptide reads, in one-letter code: MKYIFVTGGVVSSLGKGVASASLGALLRARGYKVTAVKIDPYINIDAGTMRPYEHGEVFVTASGAETDLDIGNYERFLDLDIPAGSNITTGQVYQEVIRKERAGDYLSQTVQVIPHVTDEIKRRIRVAGETAGAEIVLIEVGGTVGDIESLPFLEAIRQFKFDEGDENVLFLHLTLVPYLGTSNEFKTKPTQHSVATLRSVGISPDIVMVRSKTKLPPEITRKIALFTSVRENRVFSSYDVGHVYEVPLALEEQGLGKVVEDLLGLERTMPNLGVWTNAVRTIKQPTREVTIAIAGKYTEMPDAYLSLMESLTHAGIANDARVNIRWVNAEELTESGEGGLATQLGNADGILVPGGFGIRGIEGKIKAAEYARTRGVPYLGICLGMQIAVIEYARHVAGLEGANSAEFDEYAPHKVIDLMPEQLEVGGKGGTMRLGDWPMDLRGGTTIAELYGVPQGGTVKERHRHRYEVNPAYTEQLQDAGLTISGVTPGVAGRGAGLVESVEIAGHPFFVALQAHPEFKSRPMRPSPPFAGFVKAALRGQSSDEQGTEATTASV.

Positions 1-266 are amidoligase domain; the sequence is MKYIFVTGGV…GKVVEDLLGL (266 aa). Ser-12 contacts CTP. Ser-12 lines the UTP pocket. 13–18 is a binding site for ATP; the sequence is SLGKGV. Tyr-53 contacts L-glutamine. Asp-70 is a binding site for ATP. 2 residues coordinate Mg(2+): Asp-70 and Glu-140. Residues 147-149, 187-192, and Lys-223 each bind CTP; these read DIE and KTKPTQ. Residues 187 to 192 and Lys-223 contribute to the UTP site; that span reads KTKPTQ. In terms of domain architecture, Glutamine amidotransferase type-1 spans 291-544; sequence TIAIAGKYTE…VKAALRGQSS (254 aa). Gly-356 is an L-glutamine binding site. Cys-383 (nucleophile; for glutamine hydrolysis) is an active-site residue. Residues 384–387, Glu-407, and Arg-467 contribute to the L-glutamine site; that span reads LGMQ. Residues His-517 and Glu-519 contribute to the active site.

It belongs to the CTP synthase family. Homotetramer.

It carries out the reaction UTP + L-glutamine + ATP + H2O = CTP + L-glutamate + ADP + phosphate + 2 H(+). It catalyses the reaction L-glutamine + H2O = L-glutamate + NH4(+). The enzyme catalyses UTP + NH4(+) + ATP = CTP + ADP + phosphate + 2 H(+). It functions in the pathway pyrimidine metabolism; CTP biosynthesis via de novo pathway; CTP from UDP: step 2/2. Allosterically activated by GTP, when glutamine is the substrate; GTP has no effect on the reaction when ammonia is the substrate. The allosteric effector GTP functions by stabilizing the protein conformation that binds the tetrahedral intermediate(s) formed during glutamine hydrolysis. Inhibited by the product CTP, via allosteric rather than competitive inhibition. Functionally, catalyzes the ATP-dependent amination of UTP to CTP with either L-glutamine or ammonia as the source of nitrogen. Regulates intracellular CTP levels through interactions with the four ribonucleotide triphosphates. The sequence is that of CTP synthase from Deinococcus deserti (strain DSM 17065 / CIP 109153 / LMG 22923 / VCD115).